A 329-amino-acid chain; its full sequence is Small ribosomal subunit protein RACK1 (329 aa).

WD repeat units follow at residues 19–59 (GHNG…ATSP), 68–107 (GHSHFVQDVVISHDGQFALSGSWDNTLRLWDITKGVSTRL), 110–149 (GHTQDVMSVAFSSDNRQIISGSRDATIKVWNTLGECKFTL), 154–193 (AHQDWVSCIRFSPNTPTIVSGSWDNKVKIWDIKSFKCNHT), 196–235 (DHTGYVNTVTISPDGSLCASGGKDTFACLWELSSGKPLYK), 237–275 (EARNTINALAFSPNKYWLSAATDDKIIIWDLLTKQVLAE), and 295–328 (PKAPACLSLAWSADGSVLYAGYNDGLIRVYKSSS).

This sequence belongs to the WD repeat G protein beta family. Ribosomal protein RACK1 subfamily.

The protein is Small ribosomal subunit protein RACK1 (gpbB) of Dictyostelium discoideum (Social amoeba).